The following is a 401-amino-acid chain: MKTLWKHCHIASMAHGKYSIIEDAAIVTSGALIEWIGPQAELAEPEHDNCIDLGGAWVTPGLIDCHTHTVFGGNRSGEFEQRLQGVSYAEIAAAGGGIASTVRATRAASEDELYASAERRLRHLLKDGVTTVEMKSGYGLDLENERKILRVIRRLGNTQPVTVRATCLAAHALPPEYADRADDFINHICNEMLPALAAEGLVDAVDAFCEYLAFSPEQVERVFITAGQLALPVKLHAEQLSSLGGSSLAARYNALSADHLEFMTEDDAIAMAAAGTVAVLLPGAFYFLRETQLPPMDALRKHGVPIAISTDLNPGTSPGLSLRLMLNMACTLFRMTPEEALAGVTFNAAKALGMSATHGSLEVGKVADFVAWNIERPADLGYWLGGDLDKRIVRHGVESSI.

2 residues coordinate Fe(3+): histidine 66 and histidine 68. Residues histidine 66 and histidine 68 each contribute to the Zn(2+) site. Residues arginine 75, tyrosine 138, and histidine 171 each contribute to the 4-imidazolone-5-propanoate site. Tyrosine 138 provides a ligand contact to N-formimidoyl-L-glutamate. Histidine 236 contacts Fe(3+). Histidine 236 contacts Zn(2+). Glutamine 239 lines the 4-imidazolone-5-propanoate pocket. Residue aspartate 311 participates in Fe(3+) binding. Residue aspartate 311 coordinates Zn(2+). The N-formimidoyl-L-glutamate site is built by asparagine 313 and glycine 315. Threonine 316 provides a ligand contact to 4-imidazolone-5-propanoate.

Belongs to the metallo-dependent hydrolases superfamily. HutI family. Zn(2+) is required as a cofactor. It depends on Fe(3+) as a cofactor.

It is found in the cytoplasm. It carries out the reaction 4-imidazolone-5-propanoate + H2O = N-formimidoyl-L-glutamate. It functions in the pathway amino-acid degradation; L-histidine degradation into L-glutamate; N-formimidoyl-L-glutamate from L-histidine: step 3/3. In terms of biological role, catalyzes the hydrolytic cleavage of the carbon-nitrogen bond in imidazolone-5-propanoate to yield N-formimidoyl-L-glutamate. It is the third step in the universal histidine degradation pathway. The protein is Imidazolonepropionase of Pseudomonas syringae pv. tomato (strain ATCC BAA-871 / DC3000).